The sequence spans 294 residues: MTQRHWLELTLIADNDDDVLLLETALECAGAVAVTYQAANEEEIFEPEIGTTPMWSKTGVTGLFPLDTDPNAVIELLMQALGEDYPIAQHLLPESDWTRAWLEHFQPIAFGNHFWVAASEHVIEEHDAKVLRLDPGLAFGTGTHPSTAMCLHYLVNHAALHGKTVYDYGCGSGILGIAAAMMGAKAVYQTDIDPQALTASYENAQKNQVAEKIFLCEQPDLAPAVDLLVANILLEPLCALRAQFEKHLHAQSVMIFSGLLERQQQKLEQAYQDHYRIERINCRAGWILLRLTSL.

Residues threonine 147, glycine 169, aspartate 191, and asparagine 231 each contribute to the S-adenosyl-L-methionine site.

The protein belongs to the methyltransferase superfamily. PrmA family.

The protein localises to the cytoplasm. The enzyme catalyses L-lysyl-[protein] + 3 S-adenosyl-L-methionine = N(6),N(6),N(6)-trimethyl-L-lysyl-[protein] + 3 S-adenosyl-L-homocysteine + 3 H(+). In terms of biological role, methylates ribosomal protein L11. This Dichelobacter nodosus (strain VCS1703A) protein is Ribosomal protein L11 methyltransferase.